We begin with the raw amino-acid sequence, 542 residues long: Gamma-terpinene synthase 1 (542 aa).

Positions 295 and 299 each coordinate Mn(2+). The DDXXD motif motif lies at 295 to 299 (DDVYD). 2 homodimerization regions span residues 301–307 (YDTLDEL) and 373–410 (EAKWYYAGYTPTLAEYLENAKVSISSPTIISQVYFTLP). The Mn(2+) site is built by Asp-439 and Glu-447.

Belongs to the terpene synthase family. Homodimer. Requires Mn(2+) as cofactor. Mg(2+) is required as a cofactor. In terms of tissue distribution, mostly expressed in flowers and, to a lower extent, in leaves, especially in glandular trichomes.

The enzyme catalyses (2E)-geranyl diphosphate = gamma-terpinene + diphosphate. The catalysed reaction is (2E)-geranyl diphosphate = alpha-terpinene + diphosphate. It functions in the pathway secondary metabolite biosynthesis; terpenoid biosynthesis. Functionally, involved in the biosynthesis of phenolic monoterpenes natural products thymol and carvacrol which have a broad range of biological activities acting as antimicrobial compounds, insecticides, antioxidants and pharmaceutical agents. Monoterpene synthase which catalyzes the conversion of geranyl diphosphate (GPP) to gamma-terpinene and the minor products alpha-thujene, alpha-terpinene, myrcene, sabinene, (+)-R-limonene, alpha-pinene and alpha-phellandrene. The chain is Gamma-terpinene synthase 1 from Thymus vulgaris (Thyme).